The sequence spans 150 residues: Catabolic 3-dehydroquinase 2 (150 aa).

Residue Tyr23 is the Proton acceptor of the active site. Substrate contacts are provided by Asn74, His80, and Asp87. His100 (proton donor) is an active-site residue. Substrate contacts are provided by residues 101–102 (IT) and Arg111.

This sequence belongs to the type-II 3-dehydroquinase family. Homododecamer. Adopts a ring-like structure, composed of an arrangement of two hexameric rings stacked on top of one another.

It carries out the reaction 3-dehydroquinate = 3-dehydroshikimate + H2O. It functions in the pathway aromatic compound metabolism; 3,4-dihydroxybenzoate biosynthesis; 3,4-dihydroxybenzoate from 3-dehydroquinate: step 1/2. Its function is as follows. Is involved in the catabolism of quinate. Allows the utilization of quinate as carbon source via the beta-ketoadipate pathway. This chain is Catabolic 3-dehydroquinase 2, found in Neosartorya fischeri (strain ATCC 1020 / DSM 3700 / CBS 544.65 / FGSC A1164 / JCM 1740 / NRRL 181 / WB 181) (Aspergillus fischerianus).